A 463-amino-acid chain; its full sequence is Putative F-box protein At3g29830 (463 aa).

One can recognise an F-box domain in the interval 7–55 (RDRISSLPDVVLVMILSFLSFKDNVKTSILSKRWRNICYEAKNISFKES).

This is Putative F-box protein At3g29830 from Arabidopsis thaliana (Mouse-ear cress).